Reading from the N-terminus, the 228-residue chain is 2,3-bisphosphoglycerate-dependent phosphoglycerate mutase (228 aa).

Residues 8–15, 21–22, R60, 87–90, K98, 114–115, and 183–184 each bind substrate; these read RHGQSEWN, TG, ERHY, RR, and GN. H9 (tele-phosphohistidine intermediate) is an active-site residue. The active-site Proton donor/acceptor is the E87.

Belongs to the phosphoglycerate mutase family. BPG-dependent PGAM subfamily.

It carries out the reaction (2R)-2-phosphoglycerate = (2R)-3-phosphoglycerate. It participates in carbohydrate degradation; glycolysis; pyruvate from D-glyceraldehyde 3-phosphate: step 3/5. Its function is as follows. Catalyzes the interconversion of 2-phosphoglycerate and 3-phosphoglycerate. The protein is 2,3-bisphosphoglycerate-dependent phosphoglycerate mutase of Staphylococcus aureus (strain MRSA252).